A 126-amino-acid chain; its full sequence is Aspartate 1-decarboxylase (126 aa).

Serine 25 acts as the Schiff-base intermediate with substrate; via pyruvic acid in catalysis. Serine 25 is subject to Pyruvic acid (Ser). Residue threonine 57 participates in substrate binding. Residue tyrosine 58 is the Proton donor of the active site. Substrate is bound at residue 73 to 75 (GAA).

The protein belongs to the PanD family. As to quaternary structure, heterooctamer of four alpha and four beta subunits. It depends on pyruvate as a cofactor. In terms of processing, is synthesized initially as an inactive proenzyme, which is activated by self-cleavage at a specific serine bond to produce a beta-subunit with a hydroxyl group at its C-terminus and an alpha-subunit with a pyruvoyl group at its N-terminus.

The protein resides in the cytoplasm. The catalysed reaction is L-aspartate + H(+) = beta-alanine + CO2. It participates in cofactor biosynthesis; (R)-pantothenate biosynthesis; beta-alanine from L-aspartate: step 1/1. Its function is as follows. Catalyzes the pyruvoyl-dependent decarboxylation of aspartate to produce beta-alanine. The chain is Aspartate 1-decarboxylase from Photorhabdus laumondii subsp. laumondii (strain DSM 15139 / CIP 105565 / TT01) (Photorhabdus luminescens subsp. laumondii).